Reading from the N-terminus, the 554-residue chain is Glucose-6-phosphate isomerase (554 aa).

The active-site Proton donor is the Glu-359. Catalysis depends on residues His-390 and Lys-518.

This sequence belongs to the GPI family.

Its subcellular location is the cytoplasm. The catalysed reaction is alpha-D-glucose 6-phosphate = beta-D-fructose 6-phosphate. It participates in carbohydrate biosynthesis; gluconeogenesis. The protein operates within carbohydrate degradation; glycolysis; D-glyceraldehyde 3-phosphate and glycerone phosphate from D-glucose: step 2/4. Catalyzes the reversible isomerization of glucose-6-phosphate to fructose-6-phosphate. The polypeptide is Glucose-6-phosphate isomerase (Pseudomonas aeruginosa (strain LESB58)).